We begin with the raw amino-acid sequence, 154 residues long: Superoxide dismutase [Cu-Zn] (154 aa).

Cu cation is bound by residues H47, H49, and H64. A disulfide bridge links C58 with C147. H64, H72, H81, and D84 together coordinate Zn(2+). H121 provides a ligand contact to Cu cation. R144 provides a ligand contact to substrate.

Belongs to the Cu-Zn superoxide dismutase family. As to quaternary structure, homodimer. Cu cation serves as cofactor. It depends on Zn(2+) as a cofactor.

The protein localises to the cytoplasm. It catalyses the reaction 2 superoxide + 2 H(+) = H2O2 + O2. Its function is as follows. Destroys radicals which are normally produced within the cells and which are toxic to biological systems. The polypeptide is Superoxide dismutase [Cu-Zn] (SOD1) (Eremothecium gossypii (strain ATCC 10895 / CBS 109.51 / FGSC 9923 / NRRL Y-1056) (Yeast)).